A 153-amino-acid polypeptide reads, in one-letter code: Phosphatase NudJ (153 aa).

Residues 3–131 enclose the Nudix hydrolase domain; sequence KPHVTVACVV…LVAESIRCYQ (129 aa). The Nudix box signature appears at 36–57; it reads GHLEADETLVEAAARELWEETG.

It belongs to the Nudix hydrolase family. NudJ subfamily. As to quaternary structure, monomer. Mg(2+) is required as a cofactor.

This chain is Phosphatase NudJ (nudJ), found in Shigella boydii serotype 4 (strain Sb227).